The chain runs to 940 residues: MSDYKFTLNLPETEFPMRGNLANREPEMLERWTKDGLYQQIRDSRIGRTPFILHDGPPYANGSIHIGHSVNKILKDIIVKSKTMSGFDAPYVPGWDCHGLPIELKVEQKVGKPGQKISAAEFREECRKYAAEQVDGQRADFIRLGVLGDWQKPYLTMDFATEANIVRSLSKVIENGHLHKGVKPVHWCTDCGSALAEAEVEYEDKTSPAIDVAFTATDSKAVAAQFGVSDYSHPVAMVIWTTTPWTLPANRALSISPELDYSLVEFAKEGATHAVILADVLVEACMTRYGAESHNVLGKVKGAALELVRFKHPFLAFDVPAILGDHVTTDAGTGVVHTAPGHGQDDFVVGQKYGLEVANPVGDNGVYKPDTEFFAGQHVFKANDNVVALLKEKGALLHHVAYRHSYPHCWRHKTPIIFRATPQWFISMDNQNLRKQALSEIEQTQWIPDWGQSRIEKMVENRPDWCISRQRTWGVPITLFVHRETEELHPDSVSLMARVANRIEQEGIQAWWDLDAAELLGEEAEQYRKVTDTLDVWYDSGSTFASVVGARPEFHGHGVDLYLEGSDQHRGWFMSSLMISTAMTGKAPYKQVLTHGFTVDGKGRKMSKSIGNVIAPQQVTNKLGADILRLWVAATDYSGEMTVSDEILNRSADAYRRIRNTARFLLANLNGFDPAKDLVAVEDMVALDRWAVRRAAALQQEIIEAYEQYNFHIVTQKLMQFCSVELGSFYLDIIKDRQYTAKQEGHARRSCQSALFHIAEAMVRWIAPILSFTADEVWQLLPGQRNAYVFTQEWYQDLQSITLDTDLSDAYWENLLTVRNEVNKVIEQARRDKRIGGSLEAEVTLFADAALTEQLTHIGDELRFVLLTSEAKVLPLADATSDAVETELASLKLVVNATTAEKCERCWHHREEVGKIEAHPTLCHRCVTNIEGDGEVRLFA.

Positions 58-68 match the 'HIGH' region motif; that stretch reads PYANGSIHIGH. E564 serves as a coordination point for L-isoleucyl-5'-AMP. The short motif at 605 to 609 is the 'KMSKS' region element; sequence KMSKS. K608 is a binding site for ATP. The Zn(2+) site is built by C903, C906, C923, and C926.

The protein belongs to the class-I aminoacyl-tRNA synthetase family. IleS type 1 subfamily. In terms of assembly, monomer. Requires Zn(2+) as cofactor.

The protein resides in the cytoplasm. The catalysed reaction is tRNA(Ile) + L-isoleucine + ATP = L-isoleucyl-tRNA(Ile) + AMP + diphosphate. Its function is as follows. Catalyzes the attachment of isoleucine to tRNA(Ile). As IleRS can inadvertently accommodate and process structurally similar amino acids such as valine, to avoid such errors it has two additional distinct tRNA(Ile)-dependent editing activities. One activity is designated as 'pretransfer' editing and involves the hydrolysis of activated Val-AMP. The other activity is designated 'posttransfer' editing and involves deacylation of mischarged Val-tRNA(Ile). The polypeptide is Isoleucine--tRNA ligase (Shewanella sp. (strain MR-4)).